The following is a 336-amino-acid chain: Dihydroorotate dehydrogenase (quinone) (336 aa).

Residues 62–66 (AGLDK) and threonine 86 contribute to the FMN site. Lysine 66 contacts substrate. 111-115 (NRMGF) serves as a coordination point for substrate. FMN-binding residues include asparagine 139 and asparagine 172. Asparagine 172 is a substrate binding site. The active-site Nucleophile is the serine 175. Position 177 (asparagine 177) interacts with substrate. Residues lysine 217 and threonine 245 each contribute to the FMN site. 246-247 (NT) provides a ligand contact to substrate. Residues glycine 268, glycine 297, and 318–319 (YS) contribute to the FMN site.

It belongs to the dihydroorotate dehydrogenase family. Type 2 subfamily. As to quaternary structure, monomer. It depends on FMN as a cofactor.

The protein localises to the cell membrane. It carries out the reaction (S)-dihydroorotate + a quinone = orotate + a quinol. Its pathway is pyrimidine metabolism; UMP biosynthesis via de novo pathway; orotate from (S)-dihydroorotate (quinone route): step 1/1. Catalyzes the conversion of dihydroorotate to orotate with quinone as electron acceptor. This is Dihydroorotate dehydrogenase (quinone) from Aliivibrio fischeri (strain MJ11) (Vibrio fischeri).